The primary structure comprises 463 residues: Dihydrolipoyllysine-residue succinyltransferase component of 2-oxoglutarate dehydrogenase complex, mitochondrial (463 aa).

One can recognise a Lipoyl-binding domain in the interval 73-148 (STSIEVPPMA…TVGEELAQVE (76 aa)). Position 114 is an N6-lipoyllysine (lysine 114). Positions 144–237 (LAQVEPGEAP…FTPFPRTETR (94 aa)) are disordered. Low complexity predominate over residues 148-157 (EPGEAPAEGS). Residues 184–212 (TASKKEAAPKKEAAPKKEVTEPKKADQPK) are compositionally biased toward basic and acidic residues. 3 repeat units span residues 185–190 (ASKKEA), 191–196 (APKKEA), and 197–202 (APKKEV). The segment at 185 to 209 (ASKKEAAPKKEAAPKKEVTEPKKAD) is 4 X 6 AA approximate tandem repeats of A-[SP]-K-K-E-[AV]. The stretch at 204–209 (EPKKAD) is one 4; approximate repeat. Threonine 340 is subject to Phosphothreonine. Active-site residues include histidine 435 and aspartate 439.

This sequence belongs to the 2-oxoacid dehydrogenase family. As to quaternary structure, component of the 2-oxoglutarate dehydrogenase complex (OGDC), also called alpha-ketoglutarate dehydrogenase (KGDH) complex. The copmplex is composed of the catalytic subunits OGDH (2-oxoglutarate dehydrogenase KGD1; also called E1 subunit), DLST (dihydrolipoamide succinyltransferase KGD2; also called E2 subunit) and DLD (dihydrolipoamide dehydrogenase LPD1; also called E3 subunit), and the assembly factor KGD4. Requires (R)-lipoate as cofactor.

It localises to the mitochondrion. The catalysed reaction is N(6)-[(R)-dihydrolipoyl]-L-lysyl-[protein] + succinyl-CoA = N(6)-[(R)-S(8)-succinyldihydrolipoyl]-L-lysyl-[protein] + CoA. It participates in amino-acid degradation; L-lysine degradation via saccharopine pathway; glutaryl-CoA from L-lysine: step 6/6. Functionally, the 2-oxoglutarate dehydrogenase complex catalyzes the overall conversion of 2-oxoglutarate to succinyl-CoA and CO(2). It contains multiple copies of three enzymatic components: 2-oxoglutarate dehydrogenase (E1), dihydrolipoamide succinyltransferase (E2) and lipoamide dehydrogenase (E3). In Saccharomyces cerevisiae (strain ATCC 204508 / S288c) (Baker's yeast), this protein is Dihydrolipoyllysine-residue succinyltransferase component of 2-oxoglutarate dehydrogenase complex, mitochondrial (KGD2).